Consider the following 246-residue polypeptide: tRNA (guanine-N(7)-)-methyltransferase (246 aa).

The segment at 1-26 (MIENPSPSAANLPEHPSTDASHPRNI) is disordered. S-adenosyl-L-methionine-binding residues include glutamate 75, glutamate 100, aspartate 127, and aspartate 150. Aspartate 150 is an active-site residue. A substrate-binding site is contributed by lysine 154. The interval 156-161 (KHNKRR) is interaction with RNA. Substrate contacts are provided by residues aspartate 186 and 225-228 (TKFE).

The protein belongs to the class I-like SAM-binding methyltransferase superfamily. TrmB family.

The enzyme catalyses guanosine(46) in tRNA + S-adenosyl-L-methionine = N(7)-methylguanosine(46) in tRNA + S-adenosyl-L-homocysteine. The protein operates within tRNA modification; N(7)-methylguanine-tRNA biosynthesis. Its function is as follows. Catalyzes the formation of N(7)-methylguanine at position 46 (m7G46) in tRNA. This Polaromonas sp. (strain JS666 / ATCC BAA-500) protein is tRNA (guanine-N(7)-)-methyltransferase.